Reading from the N-terminus, the 497-residue chain is Cytochrome P450 monooxygenase 151 (497 aa).

Residues 1–21 traverse the membrane as a helical segment; the sequence is MTDLVPVYYAFAGVVAALLFY. N-linked (GlcNAc...) asparagine glycosylation is found at asparagine 292 and asparagine 397. Position 441 (cysteine 441) interacts with heme.

This sequence belongs to the cytochrome P450 family. Heme is required as a cofactor.

The protein resides in the membrane. Its pathway is secondary metabolite biosynthesis. Its function is as follows. Cytochrome P450 monooxygenase that is able to use dehydroabietic acid and testosterone as substrates for oxidation, suggesting that the natural substrate(s) may be structurally related to steroid compounds. The chain is Cytochrome P450 monooxygenase 151 from Postia placenta (strain ATCC 44394 / Madison 698-R) (Brown rot fungus).